The sequence spans 367 residues: Cobalt-precorrin-5B C(1)-methyltransferase (367 aa).

It belongs to the CbiD family.

It carries out the reaction Co-precorrin-5B + S-adenosyl-L-methionine = Co-precorrin-6A + S-adenosyl-L-homocysteine. The protein operates within cofactor biosynthesis; adenosylcobalamin biosynthesis; cob(II)yrinate a,c-diamide from sirohydrochlorin (anaerobic route): step 6/10. In terms of biological role, catalyzes the methylation of C-1 in cobalt-precorrin-5B to form cobalt-precorrin-6A. This chain is Cobalt-precorrin-5B C(1)-methyltransferase, found in Thermosynechococcus vestitus (strain NIES-2133 / IAM M-273 / BP-1).